The primary structure comprises 59 residues: Large ribosomal subunit protein bL32 (59 aa).

The segment at 1–23 (MAVQQNKKSPSKRGMHRSHDFLT) is disordered.

Belongs to the bacterial ribosomal protein bL32 family.

The chain is Large ribosomal subunit protein bL32 from Burkholderia multivorans (strain ATCC 17616 / 249).